A 371-amino-acid chain; its full sequence is Peptidyl-prolyl cis-trans isomerase D (371 aa).

Residues 8 to 172 (FFDIAIGGQL…EPVVIADCGQ (165 aa)) form the PPIase cyclophilin-type domain. The interval 175 to 202 (SDDPFLAERTSTDGDPYEDYPDDEDQEL) is disordered. A compositionally biased stretch (acidic residues) spans 189-201 (DPYEDYPDDEDQE). TPR repeat units lie at residues 212–245 (AKTI…LDVH), 265–303 (APLL…LELS), and 308–341 (AKAY…LPED).

This sequence belongs to the cyclophilin-type PPIase family. PPIase D subfamily.

The protein localises to the cytoplasm. It catalyses the reaction [protein]-peptidylproline (omega=180) = [protein]-peptidylproline (omega=0). In terms of biological role, PPIases accelerate the folding of proteins. It catalyzes the cis-trans isomerization of proline imidic peptide bonds in oligopeptides. The protein is Peptidyl-prolyl cis-trans isomerase D (Cyp40) of Amanita muscaria (Fly agaric).